Consider the following 465-residue polypeptide: RuvB-like helicase 2 (465 aa).

72 to 79 (GPPSTGKT) contacts ATP.

Belongs to the RuvB family. May form heterododecamers with RVB1. Component of the SWR1 chromatin remodeling complex, the INO80 chromatin remodeling complex, and of the R2TP complex. Interacts with dil1.

The protein localises to the nucleus. The enzyme catalyses ATP + H2O = ADP + phosphate + H(+). In terms of biological role, DNA helicase which participates in several chromatin remodeling complexes, including the SWR1 and the INO80 complexes. The SWR1 complex mediates the ATP-dependent exchange of histone H2A for the H2A variant HZT1 leading to transcriptional regulation of selected genes by chromatin remodeling. The INO80 complex remodels chromatin by shifting nucleosomes and is involved in DNA repair. Also involved in pre-rRNA processing. The sequence is that of RuvB-like helicase 2 (rvb2) from Schizosaccharomyces pombe (strain 972 / ATCC 24843) (Fission yeast).